The following is a 461-amino-acid chain: Photosystem II CP43 reaction center protein (461 aa).

The propeptide occupies 1 to 2 (ME). Residue Thr-3 is modified to N-acetylthreonine. The residue at position 3 (Thr-3) is a Phosphothreonine. Helical transmembrane passes span 57–81 (LFEV…PHLA), 122–143 (IIGP…KDKN), 166–188 (KAMF…RVIS), 243–263 (KPFS…LSYS), and 279–300 (WFNN…ASQA). Glu-355 is a [CaMn4O5] cluster binding site. A helical transmembrane segment spans residues 435–459 (RARAASGGFEKGLDRENEPVLSMKL).

This sequence belongs to the PsbB/PsbC family. PsbC subfamily. As to quaternary structure, PSII is composed of 1 copy each of membrane proteins PsbA, PsbB, PsbC, PsbD, PsbE, PsbF, PsbH, PsbI, PsbJ, PsbK, PsbL, PsbM, PsbT, PsbX, PsbY, PsbZ, Psb30/Ycf12, at least 3 peripheral proteins of the oxygen-evolving complex and a large number of cofactors. It forms dimeric complexes. Binds multiple chlorophylls and provides some of the ligands for the Ca-4Mn-5O cluster of the oxygen-evolving complex. It may also provide a ligand for a Cl- that is required for oxygen evolution. PSII binds additional chlorophylls, carotenoids and specific lipids. is required as a cofactor.

It is found in the plastid. The protein localises to the cyanelle thylakoid membrane. In terms of biological role, one of the components of the core complex of photosystem II (PSII). It binds chlorophyll and helps catalyze the primary light-induced photochemical processes of PSII. PSII is a light-driven water:plastoquinone oxidoreductase, using light energy to abstract electrons from H(2)O, generating O(2) and a proton gradient subsequently used for ATP formation. The chain is Photosystem II CP43 reaction center protein from Cyanophora paradoxa.